Reading from the N-terminus, the 295-residue chain is MSDYLVKALAYDGQVRAYAARTTDTVSEAQRRHQTWPTASAALGRAITAGVMMGAMLKGDDKLTIKIDGGGPIGTILVDSNAKGEVRGYVTNPHVHFDLNEHGKLDVAKAVGKNGMLTVVKDLGLRDFFTGQVPIISGELGEDFTYYFASSEQVPSSVGVGVLVNPDNTILAAGGFIIQLMPGTEEKTIEQIEQRLQTIPPVSKMVESGLTPEEILEELLGKGNVKVLETLPVSFVCRCSRERIADAIISLGPQEIQDIMEKEGYAEASCHFCNETYHFTKEELEQLKQLAEAKN.

2 disulfide bridges follow: cysteine 237–cysteine 239 and cysteine 270–cysteine 273.

The protein belongs to the HSP33 family. Under oxidizing conditions two disulfide bonds are formed involving the reactive cysteines. Under reducing conditions zinc is bound to the reactive cysteines and the protein is inactive.

Its subcellular location is the cytoplasm. Functionally, redox regulated molecular chaperone. Protects both thermally unfolding and oxidatively damaged proteins from irreversible aggregation. Plays an important role in the bacterial defense system toward oxidative stress. In Geobacillus sp. (strain WCH70), this protein is 33 kDa chaperonin.